The chain runs to 463 residues: FAD-dependent monooxygenase nodM (463 aa).

Residues 5–25 (EFKVIIVGGSLAGLTLAHCLL) form a helical membrane-spanning segment. FAD is bound by residues Glu35, Gly49, Arg108, Asp305, and Ala318. Residues 438 to 458 (ILLGFTGVFTSALAMVVLLHI) traverse the membrane as a helical segment.

The protein belongs to the paxM FAD-dependent monooxygenase family. FAD is required as a cofactor.

The protein resides in the membrane. Its pathway is secondary metabolite biosynthesis. Its function is as follows. FAD-dependent monooxygenase; part of the gene cluster that mediates the biosynthesis of the indole diterpenes nodulisporic acids (NA). Nodulisporic acid A (NAA) and its chemically modified derivatives are of particular significance because of their highly potent insecticidal activity against blood-feeding arthropods and lack of observable adverse effects on mammals, in particular the tremogenicity associated with the paspaline-derived IDTs is not observed. The geranylgeranyl diphosphate (GGPP) synthase ggs1, localized outside of the cluster, is proposed to catalyze the first step in nodulisporic acid biosynthesis via conversion of farnesyl pyrophosphate and isopentyl pyrophosphate into geranylgeranyl pyrophosphate (GGPP). Condensation of indole-3-glycerol phosphate with GGPP by the prenyl transferase nodC then forms 3-geranylgeranylindole (3-GGI). Epoxidation by the FAD-dependent monooxygenase nodM leads to a single-epoxidized-GGI that is substrate of the terpene cyclase nodB for cyclization to yield emindole SB. The terminal methyl carbon, C28, of emindole SB is then oxidized by the cytochrome P450 monooxygenase nodW to produce nodulisporic acid F (NAF), the pentacyclic core of NAA. NAF is converted to nodulisporic acid E (NAE) via prenylation. This step is probably performed by one of the indole diterpene prenyltransferases nodD1 or nodD2. Several oxidation steps performed by the FAD-linked oxidoreductase nodO and one of the cytochrome P450 monooxygenase nodR, nodX or nodZ further convert NAE to nodulisporic acid D (NAD). NAD is substrate of cytochrome P450 monooxygenase nodJ to produce the precursor of nodulisporic acid C (NAC), converted to NAC by one of the indole diterpene prenyltransferases nodD1 or nodD2. The FAD-dependent monooxygenase nodY2 then oxidizes NAC to nodulisporic acid B (NAB). Finally NAB is converted to NAA by one of the cytochrome P450 monooxygenases nodR, nodX or nodZ. The protein is FAD-dependent monooxygenase nodM of Hypoxylon pulicicidum.